Here is a 67-residue protein sequence, read N- to C-terminus: Ayadualin (67 aa).

The signal sequence occupies residues 1–20; it reads MNKIILFSAVFLALVFCAEA. The span at 35-54 shows a compositional bias: acidic residues; it reads PDDTVDIDEGLPDAFDEDYE. The tract at residues 35–67 is disordered; the sequence is PDDTVDIDEGLPDAFDEDYEQDGHNPYPCRGDC. The short motif at 64–66 is the Integrin-binding motif element; it reads RGD.

In terms of tissue distribution, salivary gland.

It is found in the secreted. Inhibits collagen- and ADP-induced host platelet aggregation by blocking the binding of host integrin alpha-IIb/beta-3 (ITGA2B/ITGB3) to fibrinogen. Inhibits the intrinsic blood coagulation pathway in the host by blocking the activity of host coagulation factor XIIa (F12). This Lutzomyia ayacuchensis (Sand fly) protein is Ayadualin.